Here is a 278-residue protein sequence, read N- to C-terminus: Shikimate dehydrogenase (NADP(+)) (278 aa).

Residues 18 to 20 and T65 each bind shikimate; that span reads SRS. K69 acts as the Proton acceptor in catalysis. E80 is a binding site for NADP(+). Shikimate-binding residues include N89 and D104. Residues 129 to 133 and L218 contribute to the NADP(+) site; that span reads GAGGS. Shikimate is bound at residue Y220. G241 provides a ligand contact to NADP(+).

Belongs to the shikimate dehydrogenase family. Homodimer.

The enzyme catalyses shikimate + NADP(+) = 3-dehydroshikimate + NADPH + H(+). Its pathway is metabolic intermediate biosynthesis; chorismate biosynthesis; chorismate from D-erythrose 4-phosphate and phosphoenolpyruvate: step 4/7. Functionally, involved in the biosynthesis of the chorismate, which leads to the biosynthesis of aromatic amino acids. Catalyzes the reversible NADPH linked reduction of 3-dehydroshikimate (DHSA) to yield shikimate (SA). The chain is Shikimate dehydrogenase (NADP(+)) from Rhodopseudomonas palustris (strain TIE-1).